We begin with the raw amino-acid sequence, 583 residues long: Septin-9 (583 aa).

Methionine 1 carries the N-acetylmethionine modification. Over residues 1-14 the composition is skewed to polar residues; sequence MKKSYSGVTRTSSG. Residues 1–49 are disordered; it reads MKKSYSGVTRTSSGRLRRLADPTGPALKRSFEVEEIEPPNSTPPRRVQT. Phosphoserine is present on serine 30. 2 positions are modified to phosphothreonine: threonine 42 and threonine 49. Residue lysine 62 is modified to N6-acetyllysine. Residues 79–105 form a disordered region; sequence DSLSQRSPKPSLRRVELAGAKAPEPMS. Serine 82, serine 85, and serine 89 each carry phosphoserine. Threonine 143 is subject to Phosphothreonine. The disordered stretch occupies residues 166 to 252; it reads VETPASKIPE…TPSCVGDMAD (87 aa). The span at 204–221 shows a compositional bias: polar residues; it reads LPSQTLENSEAPMSQLQS. Tyrosine 276 is modified (phosphotyrosine). A Septin-type G domain is found at 293-565; it reads QGFEFNIMVV…EAYRVKRLNE (273 aa). A G1 motif region spans residues 303 to 310; sequence GQSGLGKS. Residue 303–310 coordinates GTP; the sequence is GQSGLGKS. Phosphoserine occurs at positions 325 and 330. Residues threonine 337, glycine 363, 443-451, glycine 499, and arginine 514 contribute to the GTP site; that span reads KADTLTLEE. The segment at 360–363 is G3 motif; sequence DTPG. The G4 motif stretch occupies residues 442–445; it reads AKAD.

This sequence belongs to the TRAFAC class TrmE-Era-EngA-EngB-Septin-like GTPase superfamily. Septin GTPase family. As to quaternary structure, septins polymerize into heterooligomeric protein complexes that form filaments, and associate with cellular membranes, actin filaments, and microtubules. GTPase activity is required for filament formation. Interacts with SEPTIN2, SEPTIN6, SEPTIN7, SEPTIN11 and SEPTIN14. Interacts with RTKN and ARHGEF18. In terms of tissue distribution, expressed in all tissues examined except muscle. Isoforms are differentially expressed in testes, kidney, liver, heart, spleen and brain.

It is found in the cytoplasm. It localises to the cytoskeleton. Functionally, filament-forming cytoskeletal GTPase. May play a role in cytokinesis (Potential). The sequence is that of Septin-9 from Mus musculus (Mouse).